A 390-amino-acid polypeptide reads, in one-letter code: 3-ketoacyl-CoA thiolase (390 aa).

Catalysis depends on cysteine 95, which acts as the Acyl-thioester intermediate. Residues histidine 346 and cysteine 376 each act as proton acceptor in the active site.

The protein belongs to the thiolase-like superfamily. Thiolase family. Heterotetramer of two alpha chains (FadB) and two beta chains (FadA).

The protein resides in the cytoplasm. The enzyme catalyses an acyl-CoA + acetyl-CoA = a 3-oxoacyl-CoA + CoA. It participates in lipid metabolism; fatty acid beta-oxidation. Functionally, catalyzes the final step of fatty acid oxidation in which acetyl-CoA is released and the CoA ester of a fatty acid two carbons shorter is formed. This Psychrobacter arcticus (strain DSM 17307 / VKM B-2377 / 273-4) protein is 3-ketoacyl-CoA thiolase.